A 274-amino-acid chain; its full sequence is 4-hydroxy-3-methylbut-2-enyl diphosphate reductase (274 aa).

A [4Fe-4S] cluster-binding site is contributed by C12. (2E)-4-hydroxy-3-methylbut-2-enyl diphosphate is bound by residues H36 and H70. 2 residues coordinate dimethylallyl diphosphate: H36 and H70. Positions 36 and 70 each coordinate isopentenyl diphosphate. A [4Fe-4S] cluster-binding site is contributed by C92. H120 serves as a coordination point for (2E)-4-hydroxy-3-methylbut-2-enyl diphosphate. A dimethylallyl diphosphate-binding site is contributed by H120. H120 contacts isopentenyl diphosphate. E122 functions as the Proton donor in the catalytic mechanism. Position 158 (T158) interacts with (2E)-4-hydroxy-3-methylbut-2-enyl diphosphate. C186 is a [4Fe-4S] cluster binding site. Positions 214, 215, 216, and 258 each coordinate (2E)-4-hydroxy-3-methylbut-2-enyl diphosphate. 4 residues coordinate dimethylallyl diphosphate: S214, S215, N216, and S258. S214, S215, N216, and S258 together coordinate isopentenyl diphosphate.

It belongs to the IspH family. [4Fe-4S] cluster is required as a cofactor.

The enzyme catalyses isopentenyl diphosphate + 2 oxidized [2Fe-2S]-[ferredoxin] + H2O = (2E)-4-hydroxy-3-methylbut-2-enyl diphosphate + 2 reduced [2Fe-2S]-[ferredoxin] + 2 H(+). It carries out the reaction dimethylallyl diphosphate + 2 oxidized [2Fe-2S]-[ferredoxin] + H2O = (2E)-4-hydroxy-3-methylbut-2-enyl diphosphate + 2 reduced [2Fe-2S]-[ferredoxin] + 2 H(+). It functions in the pathway isoprenoid biosynthesis; dimethylallyl diphosphate biosynthesis; dimethylallyl diphosphate from (2E)-4-hydroxy-3-methylbutenyl diphosphate: step 1/1. The protein operates within isoprenoid biosynthesis; isopentenyl diphosphate biosynthesis via DXP pathway; isopentenyl diphosphate from 1-deoxy-D-xylulose 5-phosphate: step 6/6. Functionally, catalyzes the conversion of 1-hydroxy-2-methyl-2-(E)-butenyl 4-diphosphate (HMBPP) into a mixture of isopentenyl diphosphate (IPP) and dimethylallyl diphosphate (DMAPP). Acts in the terminal step of the DOXP/MEP pathway for isoprenoid precursor biosynthesis. In Campylobacter curvus (strain 525.92), this protein is 4-hydroxy-3-methylbut-2-enyl diphosphate reductase.